Reading from the N-terminus, the 342-residue chain is Fructose-1,6-bisphosphatase class 1 (342 aa).

The Mg(2+) site is built by Glu97, Asp119, Leu121, and Asp122. Substrate is bound by residues 122 to 125 (DGSS), Asn215, Tyr247, and Lys280. Glu286 contacts Mg(2+).

It belongs to the FBPase class 1 family. As to quaternary structure, homotetramer. The cofactor is Mg(2+).

It is found in the cytoplasm. The catalysed reaction is beta-D-fructose 1,6-bisphosphate + H2O = beta-D-fructose 6-phosphate + phosphate. The protein operates within carbohydrate biosynthesis; gluconeogenesis. In Leptospira interrogans serogroup Icterohaemorrhagiae serovar copenhageni (strain Fiocruz L1-130), this protein is Fructose-1,6-bisphosphatase class 1.